The primary structure comprises 1153 residues: Myosin-3 (1153 aa).

A Myosin N-terminal SH3-like domain is found at Lys104–Pro153. Residues Asp157–Asn829 enclose the Myosin motor domain. ATP contacts are provided by residues Gly248–Thr255 and Asn296–Lys304. Actin-binding stretches follow at residues Leu581 to Leu615 and Leu709 to Asn731. IQ domains lie at Thr831–Ile860, Leu854–Ala883, and Thr903–Gly932. A coiled-coil region spans residues Tyr948–Glu996. The tract at residues Asp1020 to Arg1050 is disordered. Over residues Asn1024–Asp1033 the composition is skewed to polar residues.

The protein belongs to the TRAFAC class myosin-kinesin ATPase superfamily. Myosin family. Plant myosin class VIII subfamily. As to quaternary structure, homodimer.

In terms of biological role, myosin heavy chain that is required for the cell cycle-regulated transport of various organelles and proteins for their segregation. Functions by binding with its tail domain to receptor proteins on organelles and exerting force with its N-terminal motor domain against actin filaments, thereby transporting its cargo along polarized actin cables. The protein is Myosin-3 (VIII-A) of Arabidopsis thaliana (Mouse-ear cress).